Reading from the N-terminus, the 589-residue chain is ATP-dependent lipid A-core flippase (589 aa).

5 consecutive transmembrane segments (helical) span residues W29–L49, A68–I88, V157–L177, L254–A274, and L283–K303. The 283-residue stretch at V32–S314 folds into the ABC transmembrane type-1 domain. The ABC transporter domain maps to I346–M582. Residue G380 to S387 coordinates ATP.

The protein belongs to the ABC transporter superfamily. Lipid exporter (TC 3.A.1.106) family. In terms of assembly, homodimer.

The protein localises to the cell inner membrane. It carries out the reaction ATP + H2O + lipid A-core oligosaccharideSide 1 = ADP + phosphate + lipid A-core oligosaccharideSide 2.. In terms of biological role, involved in lipopolysaccharide (LPS) biosynthesis. Translocates lipid A-core from the inner to the outer leaflet of the inner membrane. Transmembrane domains (TMD) form a pore in the inner membrane and the ATP-binding domain (NBD) is responsible for energy generation. In Xylella fastidiosa (strain 9a5c), this protein is ATP-dependent lipid A-core flippase.